Consider the following 2116-residue polypeptide: Non-structural polyprotein p200 (2116 aa).

The interval 36–49 (EVRDVVTAAQKRAI) is required for efficient proteolysis and P150-P90 interaction. The region spanning 57–247 (VFTQMQVSDH…TRPCTTRIYQ (191 aa)) is the Alphavirus-like MT domain. Composition is skewed to basic and acidic residues over residues 457–467 (GPLEDGGRHLD) and 497–508 (CAPRRDAPRERP). 3 disordered regions span residues 457 to 477 (GPLE…SPPR), 497 to 519 (CAPR…DDEA), and 712 to 780 (AGPG…GPAD). Pro residues-rich tracts occupy residues 721–730 (SPPPGDPPPP) and 745–767 (TPPP…PPRA). 3 consecutive short sequence motifs (pxxPxR; class II SH3-binding) follow at residues 727–732 (PPPPRR), 747–752 (PPAPAR), and 761–766 (PPAPPR). The Macro domain occupies 806 to 985 (SDIVESYARA…LTHASVLVGA (180 aa)). The interval 992–1031 (VSPPPTEPLASCPAGDPGRPAQRSASPPATPLGDATAPEP) is disordered. Residues 1000–1301 (LASCPAGDPG…WLAVPLSRGG (302 aa)) enclose the Peptidase C27 domain. Cys1152 functions as the For cysteine protease activity in the catalytic mechanism. The tract at residues 1152 to 1183 (CWLRAAASVAQAARACGAYTSAGCPKCAYGRA) is interaction with host CALM1. 4 residues coordinate Zn(2+): Cys1175, Cys1178, Cys1227, and His1273. The interval 1193-1228 (FAALSQRWSASHADASPDGTGDPLDPLMETVGCACS) is EF-hand-like. The active-site For cysteine protease activity is the His1273. The (+)RNA virus helicase ATP-binding domain maps to 1320-1468 (EVRRLGDDAM…VPDRWPTERS (149 aa)). Residue 1352-1359 (MAAGAGKT) participates in a ribonucleoside 5'-triphosphate binding. Positions 1469-1609 (RHTWRFPDCW…ELKEVPAGID (141 aa)) constitute a (+)RNA virus helicase C-terminal domain. The interval 1700 to 1900 (YRAGEDGSTL…VELEISAALL (201 aa)) is involved in P150-P90 interaction. In terms of domain architecture, RdRp catalytic spans 1870 to 1981 (TNAIEVDFTE…FLPEGARSAA (112 aa)). A Human RB1 binding motif is present at residues 1902–1906 (LPCAE).

In terms of assembly, interacts with RNA-directed RNA polymerase p90. Interacts with host CALM1; this interaction is necessary for the protease activity and viral infectivity. Interacts with host C1QBP. Interacts with the capsid protein. As to quaternary structure, interacts with human RB1/retinoblastoma protein. Interacts with protease/methyltransferase p150. Zn(2+) is required as a cofactor. Specific enzymatic cleavage by its own cysteine protease yield mature proteins p150 and p90.

It is found in the host membrane. The protein resides in the host cytoplasm. The protein localises to the host perinuclear region. It catalyses the reaction RNA(n) + a ribonucleoside 5'-triphosphate = RNA(n+1) + diphosphate. The enzyme catalyses a ribonucleoside 5'-triphosphate + H2O = a ribonucleoside 5'-diphosphate + phosphate + H(+). It carries out the reaction ATP + H2O = ADP + phosphate + H(+). Functionally, probable principal replicase for the negative-strand DNA, which replicates the 40S (+) genomic RNA into (-) antigenomic RNA. It cannot replicate the (-) into (+) until cleaved into p150 and p90 mature proteins. Protease that cleaves the precursor polyprotein into two mature products. Together with RNA-directed RNA polymerase p90, replicates the 40S genomic and antigenomic RNA by recognizing replications specific signals. The heterodimer P150/p90 is probably the principal replicase for positive-strand genomic RNA and the 24S subgenomic RNA, which codes for structural proteins. Responsible for the mRNA-capping of the viral mRNAs. This function is necessary since all viral RNAs are synthesized in the cytoplasm, and host capping enzymes are restricted to the nucleus. Forms fibers late in the infection that may be involved in cell-to-cell spread of the virus RNA in the absence of virus particle formation. Its function is as follows. Together with protease/methyltransferase p150, replicates the 40S genomic and antigenomic RNA by recognizing replications specific signals. The heterodimer P150/p90 is probably the principal replicase for positive-strand genomic RNA and the 24S subgenomic RNA, which codes for structural proteins. A helicase activity is probably also present. The sequence is that of Non-structural polyprotein p200 from Homo sapiens (Human).